The sequence spans 98 residues: Plastocyanin (98 aa).

Residues 1-98 (AAIVKLGGDD…AGMKMTITVQ (98 aa)) enclose the Plastocyanin-like domain. The Cu cation site is built by His-38, Cys-83, His-86, and Met-91.

Belongs to the plastocyanin family. Cu(2+) serves as cofactor.

It is found in the plastid. Its subcellular location is the chloroplast thylakoid membrane. Functionally, participates in electron transfer between P700 and the cytochrome b6-f complex in photosystem I. This chain is Plastocyanin (PETE), found in Ulva prolifera (Green seaweed).